The following is a 147-amino-acid chain: Transmembrane protein 210 (147 aa).

An N-terminal signal peptide occupies residues 1-31; it reads MAPCPQPESCPAGSPLGLICLSLLLIPASAG. The Extracellular segment spans residues 32–47; that stretch reads TYCECSLGLSREALIA. Residues 48–68 traverse the membrane as a helical segment; that stretch reads LIVVLAGVSASCFCALVVVAI. At 69–147 the chain is on the cytoplasmic side; the sequence is GVFRAKGDTC…PPPPPPPLPQ (79 aa). Residues 128 to 147 form a disordered region; the sequence is TMTAPLEPPPPPPPPPPLPQ. Over residues 133-147 the composition is skewed to pro residues; that stretch reads LEPPPPPPPPPPLPQ.

It is found in the membrane. Its subcellular location is the cytoplasmic vesicle. The protein localises to the secretory vesicle. It localises to the acrosome. The protein is Transmembrane protein 210 (Tmem210) of Mus musculus (Mouse).